The chain runs to 294 residues: NAD kinase (294 aa).

Aspartate 74 acts as the Proton acceptor in catalysis. Residues aspartate 74 to glycine 75, asparagine 148 to glutamate 149, histidine 159, arginine 176, aspartate 178, threonine 189 to serine 194, and glutamine 249 each bind NAD(+).

This sequence belongs to the NAD kinase family. Requires a divalent metal cation as cofactor.

Its subcellular location is the cytoplasm. It catalyses the reaction NAD(+) + ATP = ADP + NADP(+) + H(+). Involved in the regulation of the intracellular balance of NAD and NADP, and is a key enzyme in the biosynthesis of NADP. Catalyzes specifically the phosphorylation on 2'-hydroxyl of the adenosine moiety of NAD to yield NADP. The protein is NAD kinase of Vibrio atlanticus (strain LGP32) (Vibrio splendidus (strain Mel32)).